A 21-amino-acid polypeptide reads, in one-letter code: 5-methyltetrahydropteroyltriglutamate--homocysteine methyltransferase (21 aa).

This sequence belongs to the vitamin-B12 independent methionine synthase family. Requires Zn(2+) as cofactor.

Its subcellular location is the cytoplasm. The catalysed reaction is 5-methyltetrahydropteroyltri-L-glutamate + L-homocysteine = tetrahydropteroyltri-L-glutamate + L-methionine. Its pathway is amino-acid biosynthesis; L-methionine biosynthesis via de novo pathway; L-methionine from L-homocysteine (MetE route): step 1/1. Catalyzes the transfer of a methyl group from 5-methyltetrahydrofolate to homocysteine resulting in methionine formation. In Populus euphratica (Euphrates poplar), this protein is 5-methyltetrahydropteroyltriglutamate--homocysteine methyltransferase.